The sequence spans 90 residues: UPF0223 protein SH1855 (90 aa).

It belongs to the UPF0223 family.

The sequence is that of UPF0223 protein SH1855 from Staphylococcus haemolyticus (strain JCSC1435).